The primary structure comprises 278 residues: UPF0750 membrane protein YxkD (278 aa).

The next 5 helical transmembrane spans lie at 8–28, 46–66, 77–97, 101–121, and 145–165; these read VLMLVIGAFFFALAVNLFAIP, LFQWSPGVTNFILNAFLLLIG, YTIIAVAANSLFLHLTHGWSI, ELIINTIFAGVFAGVGIGMII, and ISYALLFFDLIVVFSSYFIIG.

Belongs to the UPF0750 family.

Its subcellular location is the cell membrane. This Bacillus subtilis (strain 168) protein is UPF0750 membrane protein YxkD (yxkD).